The following is a 580-amino-acid chain: Efflux pump dotC (580 aa).

Residues Met1 to Glu34 show a composition bias toward basic and acidic residues. The disordered stretch occupies residues Met1–Leu45. Asn10 carries an N-linked (GlcNAc...) asparagine glycan. The segment covering Glu35–Ala44 has biased composition (acidic residues). The chain crosses the membrane as a helical span at residues Pro49 to Leu69. A glycan (N-linked (GlcNAc...) asparagine) is linked at Asn86. Transmembrane regions (helical) follow at residues Ala89 to Trp109, Ala127 to Thr147, Gly153 to Leu173, Gly181 to Phe201, Trp209 to Leu229, Phe242 to Phe262, Ser275 to Val295, Ala318 to Leu338, Pro348 to Ala368, Leu380 to Phe400, Leu409 to Val429, Thr444 to Tyr466, and Ser519 to Val539. The segment at Lys559–Ser580 is disordered.

The protein belongs to the major facilitator superfamily. TCR/Tet family.

Its subcellular location is the cell membrane. It is found in the vacuole membrane. Efflux pump; part of the gene cluster that mediates the biosynthesis of dothistromin (DOTH), a polyketide toxin very similar in structure to the aflatoxin precursor, versicolorin B. One function of dotC may be to transport early-stage dothistromin biosynthetic intermediates from the cytoplasm into vacuoles, thereby affecting the rate of dothistromin production. This is Efflux pump dotC from Dothistroma septosporum (strain NZE10 / CBS 128990) (Red band needle blight fungus).